The following is a 684-amino-acid chain: MLACLTRGNLLDVLQEGFNEQQLQAYVAWVNAQLKKRPSVKPVQDLRQDLRDGVILAYLIEIVAGEKLSGVQLSPSNQQEMKSNVERVLQFVASKNIRMHQTSAKDIVEGNLKSIMRLVLALAAHFKPGSSRTVSQGRDSRTSVQSHQPHCATAVAQGAAAALADVCHDVSRSGRDVFRYRQRNASVDEEIENPYWSVRALVQQYEGQQRSPSESSCSSLTSPSPIHSAKSESIITQSEEKADFVIIPSEGIENRTDETGSPLSRDWRPGSPGTYLEATWEEQLLEQQEHLEKEMEEAKKMISGLQALLLNGSLPEDEQERPVALCEPGVNPEEQLIIIRSRLDQSMEENQDLKKELLKCKQEARNLQGIKDALQQRLTQQDTSVLQLKQELLRANMDKDELHNQNVDLQRKLDERNRLLGEYKKDLGQKDRLLQQQQAKLEDALRKLSDASYQQVDLERELEQKDVLLAHRVKGDTDEVTNYNSHSSQRNGFVLPVAGRAATTATHRGPQSSDLQLVRDALRSLRNSFSGHDPQHHTIDSLEQGISSLIERLHVIETQKKQERKVRGRSPRNQASSEYRASWPPNSTLPHSQSSPAVSNTCTKVLYFTDRSLTPFMVNIPKRLGEVTLKDFKAAIDREGSHRYHFKALDPEFGTVKEEVFHDDDAIPGWEGKIVAWVEDHREN.

The 108-residue stretch at 20–127 folds into the Calponin-homology (CH) domain; it reads EQQLQAYVAW…LVLALAAHFK (108 aa). Positions 127 to 300 are actin-binding; it reads KPGSSRTVSQ…LEKEMEEAKK (174 aa). Ser-186 is subject to Phosphoserine. The segment at 207–235 is disordered; that stretch reads GQQRSPSESSCSSLTSPSPIHSAKSESII. Positions 211 to 228 are enriched in low complexity; that stretch reads SPSESSCSSLTSPSPIHS. Phosphoserine is present on Ser-231. 2 coiled-coil regions span residues 277–308 and 336–461; these read EATW…LQAL and LIII…LERE. A disordered region spans residues 560 to 597; sequence KKQERKVRGRSPRNQASSEYRASWPPNSTLPHSQSSPA. The segment covering 571–597 has biased composition (polar residues); it reads PRNQASSEYRASWPPNSTLPHSQSSPA. Phosphoserine is present on Ser-592. Residues 602 to 682 form the DIX domain; the sequence is CTKVLYFTDR…KIVAWVEDHR (81 aa).

This sequence belongs to the DIXDC1 family. In terms of assembly, may bind filamentous actin. Interacts with the complex composed of DVL2 and Rac. Interacts with AXIN1; competes with MAP3K1. Interacts with MAP3K4 preventing MAP3K4 interaction with AXIN1. Directly interacts (via DIX domain) with DVL2 (via DIX domain). Interacts with gamma-tubulin. Post-translationally, phosphorylated on tyrosine and serine residues. Polyubiquitinated, leading to its proteasomal degradation. WNT3A signaling increases DIXDC1 protein levels by inhibiting its ubiquitination and subsequent degradation.

Its subcellular location is the cell junction. It localises to the focal adhesion. The protein localises to the cytoplasm. The protein resides in the cytoskeleton. It is found in the stress fiber. Functionally, positive effector of the Wnt signaling pathway; activates WNT3A signaling via DVL2. Regulates JNK activation by AXIN1 and DVL2. This chain is Dixin (Dixdc1), found in Rattus norvegicus (Rat).